An 89-amino-acid polypeptide reads, in one-letter code: Toxin To14 (89 aa).

Residues 1–19 form the signal peptide; that stretch reads MNCLMLIFVVFLLAFGVEC. The LCN-type CS-alpha/beta domain occupies 21–85; sequence KDDYPVDTAK…SPTKTSGRCN (65 aa). Disulfide bonds link cysteine 33–cysteine 84, cysteine 37–cysteine 60, cysteine 46–cysteine 67, and cysteine 50–cysteine 69.

In terms of tissue distribution, expressed by the venom gland.

The protein resides in the secreted. Inhibits voltage-gated sodium channels (Nav). The chain is Toxin To14 from Tityus obscurus (Amazonian scorpion).